A 516-amino-acid chain; its full sequence is High-affinity nitrate transporter 2.3 (516 aa).

A run of 12 helical transmembrane segments spans residues 52–72 (WFSF…LPLI), 76–96 (LGLT…GAVF), 112–132 (LASA…SIIQ), 142–162 (FFTG…SSMF), 172–192 (GVAG…MPLV), 209–229 (IAFF…LAFG), 265–285 (WILA…DNVV), 299–319 (TAGL…PGGG), 335–354 (LWGL…VLGI), 367–387 (VLFS…VPFV), 395–415 (ISGM…YIFF), and 425–445 (GIKY…LIYF). Residues 489–516 (SVREGGRSSANGGQPRHTVPVDASPAGV) form a disordered region.

The protein belongs to the major facilitator superfamily. Nitrate/nitrite porter (TC 2.A.1.8) family. In terms of assembly, heterotetramer composed of two NRT2.3 and two NAR2.1. Isoform 1 interacts with NAR2.1, but not isoform 2. In terms of tissue distribution, expressed in the stelar cells of both primary and lateral roots, particularly at the site of lateral root emergence, root-shoot junction zone, vascular tissues of adventitious root primordia, leaves, germ tips and seed scutellum.

Its subcellular location is the cell membrane. Involved in nitrate transport, but does not seem to be able to mediate transport by its own. Acts as a dual component transporter with NAR2.1. Imports nitrate with high affinity when expressed with NAR2.1 in a heterologous system (Xenopus oocytes). Plays a key role in long-distance nitrate transport from root to shoot particularly at low external nitrate supply. This chain is High-affinity nitrate transporter 2.3 (NRT2.3), found in Oryza sativa subsp. japonica (Rice).